The following is a 246-amino-acid chain: Alpha-tubulin N-acetyltransferase (246 aa).

Positions 21–202 (LTLVPDGVSR…NNFVVFHSFF (182 aa)) constitute an N-acetyltransferase domain. Acetyl-CoA contacts are provided by residues 135–148 (FYVD…GYGK) and 172–181 (SNKLLGFLRK).

The protein belongs to the acetyltransferase ATAT1 family.

It carries out the reaction L-lysyl-[alpha-tubulin] + acetyl-CoA = N(6)-acetyl-L-lysyl-[alpha-tubulin] + CoA + H(+). Its function is as follows. Specifically acetylates 'Lys-40' in alpha-tubulin on the lumenal side of microtubules. Promotes microtubule destabilization and accelerates microtubule dynamics; this activity may be independent of acetylation activity. Acetylates alpha-tubulin with a slow enzymatic rate, due to a catalytic site that is not optimized for acetyl transfer. Enters the microtubule through each end and diffuses quickly throughout the lumen of microtubules. Acetylates only long/old microtubules because of its slow acetylation rate since it does not have time to act on dynamically unstable microtubules before the enzyme is released. In Leishmania major, this protein is Alpha-tubulin N-acetyltransferase.